The following is a 367-amino-acid chain: Alanine racemase (367 aa).

Lysine 35 functions as the Proton acceptor; specific for D-alanine in the catalytic mechanism. Lysine 35 is subject to N6-(pyridoxal phosphate)lysine. Arginine 130 is a binding site for substrate. The Proton acceptor; specific for L-alanine role is filled by tyrosine 256. A substrate-binding site is contributed by methionine 304.

It belongs to the alanine racemase family. Pyridoxal 5'-phosphate is required as a cofactor.

It carries out the reaction L-alanine = D-alanine. It participates in amino-acid biosynthesis; D-alanine biosynthesis; D-alanine from L-alanine: step 1/1. In terms of biological role, catalyzes the interconversion of L-alanine and D-alanine. May also act on other amino acids. The sequence is that of Alanine racemase (alr) from Methylibium petroleiphilum (strain ATCC BAA-1232 / LMG 22953 / PM1).